Here is a 344-residue protein sequence, read N- to C-terminus: Ig alpha chain C region (344 aa).

The 94-residue stretch at 6–99 folds into the Ig-like 1 domain; sequence PTIYPLTLPP…SNPVQELDVN (94 aa). Intrachain disulfides connect Cys-26–Cys-84 and Cys-76–Cys-100. N-linked (GlcNAc...) asparagine glycans are attached at residues Asn-38 and Asn-99. Ser-101 carries O-linked (GalNAc) serine; in variant MOPC 47A glycosylation. 2 cysteine pairs are disulfide-bonded: Cys-114/Cys-171 and Cys-138/Cys-195. 2 consecutive Ig-like domains span residues 116–206 and 219–321; these read PSLS…GTLT and PQVH…KTID. Residue Asn-329 is glycosylated (N-linked (GlcNAc...) asparagine). Ser-331 carries an N-linked (GlcNAc...) asparagine; in variant M511 glycan.

In terms of biological role, ig alpha is the major immunoglobulin class in body secretions. It may serve both to defend against local infection and to prevent access of foreign antigens to the general immunologic system. The protein is Ig alpha chain C region of Mus musculus (Mouse).